A 364-amino-acid polypeptide reads, in one-letter code: Aminomethyltransferase (364 aa).

Belongs to the GcvT family. In terms of assembly, the glycine cleavage system is composed of four proteins: P, T, L and H.

It carries out the reaction N(6)-[(R)-S(8)-aminomethyldihydrolipoyl]-L-lysyl-[protein] + (6S)-5,6,7,8-tetrahydrofolate = N(6)-[(R)-dihydrolipoyl]-L-lysyl-[protein] + (6R)-5,10-methylene-5,6,7,8-tetrahydrofolate + NH4(+). Its function is as follows. The glycine cleavage system catalyzes the degradation of glycine. In Shigella flexneri serotype 5b (strain 8401), this protein is Aminomethyltransferase.